Here is a 938-residue protein sequence, read N- to C-terminus: Microperfuranone synthase (938 aa).

Residues 44–445 form an adenylation (A) domain region; that stretch reads TSTRISYAEL…AGRTKDTIIV (402 aa). One can recognise a Carrier domain in the interval 579-655; it reads SDSERAVQKA…AIARSIDSSR (77 aa). Residues 581–652 form a thiolation and peptide carrier (T) domain region; that stretch reads SERAVQKALV…TPGAIARSID (72 aa). S613 carries the O-(pantetheine 4'-phosphoryl)serine modification. The interval 676-923 is thioesterase (TE) domain; it reads PLFCIHPGSG…AKMLNREHIA (248 aa). S746 is an active-site residue.

Belongs to the ATP-dependent AMP-binding enzyme family.

Its pathway is secondary metabolite biosynthesis. Functionally, microperfuranone synthase is the only protein required for the biosynthesis of the secondary metabolite microperfuranone from phenylpyruvic acid (PPA). Several steps for the microperfuranione biosynthesis have been proposed. These steps include the activation of PPA, by the micA adenylation (A) domain to AMP-phenylpyruvic acid followed by loading of the PPA unit to the thiolation and peptide carrier (T) domain and eventually transferring to the thioesterase (TE) domain. After loading another PPA unit onto the T domain, aldol condensation establishes the carbon-carbon bond between the alpha- and beta-carbon of the two PPA units. Sulfur-assisted furan ring formation, TE domain mediated hydrolysis, decarboxylation, and keto-enol tautomerization would generate microperfuranone attached to the T domain. Finally, microperfuranone is released by the TE domain. In Emericella nidulans (strain FGSC A4 / ATCC 38163 / CBS 112.46 / NRRL 194 / M139) (Aspergillus nidulans), this protein is Microperfuranone synthase.